A 245-amino-acid chain; its full sequence is Adenosylcobinamide-GDP ribazoletransferase (245 aa).

Transmembrane regions (helical) follow at residues 35-55, 108-128, 137-157, 176-196, and 197-217; these read WFPL…ALGL, IGAF…IGAH, GVLI…AALV, IAIG…TPAI, and TTVT…HLAR.

It belongs to the CobS family. The cofactor is Mg(2+).

The protein localises to the cell inner membrane. It carries out the reaction alpha-ribazole + adenosylcob(III)inamide-GDP = adenosylcob(III)alamin + GMP + H(+). The enzyme catalyses alpha-ribazole 5'-phosphate + adenosylcob(III)inamide-GDP = adenosylcob(III)alamin 5'-phosphate + GMP + H(+). The protein operates within cofactor biosynthesis; adenosylcobalamin biosynthesis; adenosylcobalamin from cob(II)yrinate a,c-diamide: step 7/7. Joins adenosylcobinamide-GDP and alpha-ribazole to generate adenosylcobalamin (Ado-cobalamin). Also synthesizes adenosylcobalamin 5'-phosphate from adenosylcobinamide-GDP and alpha-ribazole 5'-phosphate. The protein is Adenosylcobinamide-GDP ribazoletransferase of Nitratidesulfovibrio vulgaris (strain ATCC 29579 / DSM 644 / CCUG 34227 / NCIMB 8303 / VKM B-1760 / Hildenborough) (Desulfovibrio vulgaris).